Reading from the N-terminus, the 430-residue chain is Probable GPI-anchored adhesin-like protein PGA32 (430 aa).

A signal peptide spans Met-1 to Gly-16. Disordered stretches follow at residues Leu-88–Asn-195, Ile-232–Lys-257, Gly-278–Phe-302, and Ser-314–Asp-336. Low complexity-rich tracts occupy residues Thr-92–Ser-112 and Thr-122–Arg-135. Over residues Thr-141–Asn-167 the composition is skewed to polar residues. Composition is skewed to low complexity over residues Ser-168–Ser-187 and Ala-233–Ala-253. A compositionally biased stretch (polar residues) spans Tyr-289–Phe-302. Residues Ser-314 to Thr-335 are compositionally biased toward low complexity. Gly-401 carries GPI-anchor amidated glycine lipidation. Residues Asp-402 to Thr-430 constitute a propeptide, removed in mature form.

The protein resides in the cell membrane. Its function is as follows. Putative adhesin which is involved in cell adhesion and virulence. This chain is Probable GPI-anchored adhesin-like protein PGA32 (PGA32), found in Candida albicans (strain SC5314 / ATCC MYA-2876) (Yeast).